The following is a 619-amino-acid chain: Zinc finger CCCH domain-containing protein 67 (619 aa).

ANK repeat units follow at residues 52-81 (EPLT…LVDP) and 88-120 (SLST…DPAL). C3H1-type zinc fingers lie at residues 213–241 (HYSC…HGVF) and 249–273 (QYRT…HTPD). The segment at 308–341 (SPGSSSFTPPLSPSAGGGGGGGGGSGGGGAWPQQ) is disordered. Gly residues predominate over residues 322-337 (AGGGGGGGGGSGGGGA).

This Oryza sativa subsp. japonica (Rice) protein is Zinc finger CCCH domain-containing protein 67.